We begin with the raw amino-acid sequence, 252 residues long: 2-succinyl-6-hydroxy-2,4-cyclohexadiene-1-carboxylate synthase (252 aa).

Belongs to the AB hydrolase superfamily. MenH family. In terms of assembly, monomer.

It carries out the reaction 5-enolpyruvoyl-6-hydroxy-2-succinyl-cyclohex-3-ene-1-carboxylate = (1R,6R)-6-hydroxy-2-succinyl-cyclohexa-2,4-diene-1-carboxylate + pyruvate. The protein operates within quinol/quinone metabolism; 1,4-dihydroxy-2-naphthoate biosynthesis; 1,4-dihydroxy-2-naphthoate from chorismate: step 3/7. It functions in the pathway quinol/quinone metabolism; menaquinone biosynthesis. Catalyzes a proton abstraction reaction that results in 2,5-elimination of pyruvate from 2-succinyl-5-enolpyruvyl-6-hydroxy-3-cyclohexene-1-carboxylate (SEPHCHC) and the formation of 2-succinyl-6-hydroxy-2,4-cyclohexadiene-1-carboxylate (SHCHC). The sequence is that of 2-succinyl-6-hydroxy-2,4-cyclohexadiene-1-carboxylate synthase from Shigella boydii serotype 4 (strain Sb227).